A 389-amino-acid chain; its full sequence is E3 ubiquitin-protein ligase E3D (389 aa).

A2 bears the N-acetylalanine mark. Positions 129 to 159 (PLPSENWGALVGEWCCHPDPFANKPLHPQEN) match the BRAT1-like motif motif. A Zn(2+)-binding site is contributed by C144. Residues 235–257 (QSSERSFPIIPRPRFVQSVIAQC) are interaction with UBE2C. The interval 353 to 389 (LPSATCLELLLILSKSNANLPSSLRHMNSFQVAFLKI) is HECT-like.

As to quaternary structure, interacts with UBE2C/UbcH10 (E2 ubiquitin-conjugating enzyme). In vitro, interacts with cyclin-B. Ubiquitinated by UBCH10 (E2 ubiquitin-conjugating enzyme).

The protein resides in the cytoplasm. It catalyses the reaction S-ubiquitinyl-[E2 ubiquitin-conjugating enzyme]-L-cysteine + [acceptor protein]-L-lysine = [E2 ubiquitin-conjugating enzyme]-L-cysteine + N(6)-ubiquitinyl-[acceptor protein]-L-lysine.. It functions in the pathway protein modification; protein ubiquitination. Functionally, E3 ubiquitin-protein ligase which accepts ubiquitin from specific E2 ubiquitin-conjugating enzymes, and transfers it to substrates, generally promoting their degradation by the proteasome. Independently of its E3 ubiquitin-protein ligase activity, acts as an inhibitor of CPSF3 endonuclease activity by blocking CPSF3 active site. The protein is E3 ubiquitin-protein ligase E3D (UBE3D) of Pongo abelii (Sumatran orangutan).